A 50-amino-acid chain; its full sequence is MARYRCCRSQSQSRCRRRRRRRCRRRRRRSVRQRRVCCRRYTVLRCRRRR.

2 disulfides stabilise this stretch: Cys-7–Cys-15 and Cys-38–Cys-46.

The protein belongs to the protamine P1 family. In terms of assembly, cross-linked by interchain disulfide bonds around the DNA-helix. Testis.

The protein resides in the nucleus. Its subcellular location is the chromosome. In terms of biological role, protamines substitute for histones in the chromatin of sperm during the haploid phase of spermatogenesis. They compact sperm DNA into a highly condensed, stable and inactive complex. The chain is Sperm protamine P1 (PRM1) from Equus caballus (Horse).